The chain runs to 590 residues: Protein O-linked-mannose beta-1,4-N-acetylglucosaminyltransferase 2 (590 aa).

Over 1–4 the chain is Cytoplasmic; the sequence is MSVG. Residues 5-25 form a helical; Signal-anchor for type II membrane protein membrane-spanning segment; it reads TLLNGLLVSIVAALLWKYSKL. Over 26–590 the chain is Lumenal; sequence SEHAALLEEE…PFADVLMCRT (565 aa). Asparagine 98, asparagine 275, and asparagine 553 each carry an N-linked (GlcNAc...) asparagine glycan. Residues 494–590 form the Fibronectin type-III domain; sequence RVRDPQCQTS…PFADVLMCRT (97 aa).

It belongs to the glycosyltransferase 61 family.

Its subcellular location is the endoplasmic reticulum membrane. The catalysed reaction is 3-O-(alpha-D-mannosyl)-L-threonyl-[protein] + UDP-N-acetyl-alpha-D-glucosamine = 3-O-(N-acetyl-beta-D-glucosaminyl-(1-&gt;4)-alpha-D-mannosyl)-L-threonyl-[protein] + UDP + H(+). Its pathway is protein modification; protein glycosylation. Its function is as follows. O-linked mannose beta-1,4-N-acetylglucosaminyltransferase that transfers UDP-N-acetyl-D-glucosamine to the 4-position of the mannose to generate N-acetyl-D-glucosamine-beta-1,4-O-D-mannosylprotein. Involved in the biosynthesis of the phosphorylated O-mannosyl trisaccharide (N-acetylgalactosamine-beta-3-N-acetylglucosamine-beta-4-(phosphate-6-)mannose), a carbohydrate structure present in alpha-dystroglycan (DAG1), which is required for binding laminin G-like domain-containing extracellular proteins with high affinity. This chain is Protein O-linked-mannose beta-1,4-N-acetylglucosaminyltransferase 2 (pomgnt2), found in Takifugu rubripes (Japanese pufferfish).